Consider the following 432-residue polypeptide: E3 ubiquitin-protein ligase ATL42 (432 aa).

Residues 1–18 (MYQIFFFFLPLLHSYASA) form the signal peptide. A helical transmembrane segment spans residues 37–57 (LAVVTGVLAIMFALTFVLLVY). The RING-type; atypical zinc-finger motif lies at 123–165 (CSVCLSKFESVEILRLLPKCRHAFHIGCIDQWLEQHATCPLCR).

The protein belongs to the RING-type zinc finger family. ATL subfamily.

Its subcellular location is the membrane. The catalysed reaction is S-ubiquitinyl-[E2 ubiquitin-conjugating enzyme]-L-cysteine + [acceptor protein]-L-lysine = [E2 ubiquitin-conjugating enzyme]-L-cysteine + N(6)-ubiquitinyl-[acceptor protein]-L-lysine.. It participates in protein modification; protein ubiquitination. In terms of biological role, E3 ubiquitin-protein ligase able to catalyze polyubiquitination with ubiquitin-conjugating enzyme E2 UBC8 in vitro. This chain is E3 ubiquitin-protein ligase ATL42 (ATL42), found in Arabidopsis thaliana (Mouse-ear cress).